The primary structure comprises 66 residues: Large ribosomal subunit protein bL35 (66 aa).

The protein belongs to the bacterial ribosomal protein bL35 family.

The chain is Large ribosomal subunit protein bL35 from Leptospira biflexa serovar Patoc (strain Patoc 1 / Ames).